We begin with the raw amino-acid sequence, 1902 residues long: PI-type proteinase (1902 aa).

Residues 1 to 33 (MQRKKKGLSILLAGTVALGALAVLPVGEIQAKA) form the signal peptide. Residues 34–187 (AISQQTKGSS…VTLAKVYYPT (154 aa)) constitute a propeptide that is removed on maturation. A Peptidase S8 domain is found at 191-697 (ANSMANVQAV…AGLVDVKAAI (507 aa)). Residues Asp-217, His-281, and Ser-620 each act as charge relay system in the active site. Residues 1796–1874 (GKGDGTTGTS…GALPKTGETT (79 aa)) form a disordered region. Gly residues predominate over residues 1797-1812 (KGDGTTGTSDKGGGQG). The span at 1830 to 1843 (SQPSSGGNIPTNPA) shows a compositional bias: polar residues. Positions 1867-1871 (LPKTG) match the LPXTG sorting signal motif. The residue at position 1870 (Thr-1870) is a Pentaglycyl murein peptidoglycan amidated threonine. The propeptide at 1871–1902 (GETTERPAFGFLGVIVVILMGVLGLKRKQREE) is removed by sortase.

It belongs to the peptidase S8 family.

The protein resides in the secreted. It localises to the cell wall. The enzyme catalyses Endopeptidase activity with very broad specificity, although some subsite preference have been noted, e.g. large hydrophobic residues in the P1 and P4 positions, and Pro in the P2 position. Best known for its action on caseins, although it has been shown to hydrolyze hemoglobin and oxidized insulin B-chain.. Its function is as follows. Protease which breaks down milk proteins during the growth of the bacteria on milk. This chain is PI-type proteinase (prtP), found in Lactococcus lactis subsp. cremoris (Streptococcus cremoris).